The chain runs to 140 residues: Large ribosomal subunit protein uL14 (140 aa).

The protein belongs to the universal ribosomal protein uL14 family. In terms of assembly, component of the large ribosomal subunit.

It localises to the cytoplasm. Functionally, component of the large ribosomal subunit. The ribosome is a large ribonucleoprotein complex responsible for the synthesis of proteins in the cell. This chain is Large ribosomal subunit protein uL14 (rpl23), found in Ictalurus punctatus (Channel catfish).